Here is a 333-residue protein sequence, read N- to C-terminus: NADH-quinone oxidoreductase subunit H (333 aa).

The next 8 helical transmembrane spans lie at 15–35 (FFIF…FVTY), 88–108 (FILA…VIPF), 117–137 (IGVG…GVVT), 159–179 (ISYE…AGSL), 191–211 (VWYI…AVAE), 239–259 (WAFF…LITV), 274–296 (IPGA…WFRV), and 313–333 (VLLP…ELFF).

It belongs to the complex I subunit 1 family. As to quaternary structure, NDH-1 is composed of 14 different subunits. Subunits NuoA, H, J, K, L, M, N constitute the membrane sector of the complex.

It is found in the cell membrane. It carries out the reaction a quinone + NADH + 5 H(+)(in) = a quinol + NAD(+) + 4 H(+)(out). NDH-1 shuttles electrons from NADH, via FMN and iron-sulfur (Fe-S) centers, to quinones in the respiratory chain. The immediate electron acceptor for the enzyme in this species is believed to be ubiquinone. Couples the redox reaction to proton translocation (for every two electrons transferred, four hydrogen ions are translocated across the cytoplasmic membrane), and thus conserves the redox energy in a proton gradient. This subunit may bind ubiquinone. This Bacillus cereus (strain G9842) protein is NADH-quinone oxidoreductase subunit H.